A 242-amino-acid polypeptide reads, in one-letter code: Proteasome subunit beta type-4 (242 aa).

Positions 1–23 are excised as a propeptide; it reads ESVARGTAPGELHCFPGAGPVRH. Residue T24 is the Nucleophile of the active site.

This sequence belongs to the peptidase T1B family. The 26S proteasome consists of a 20S proteasome core and two 19S regulatory subunits. The 20S proteasome core is composed of 28 subunits that are arranged in four stacked rings, resulting in a barrel-shaped structure. The two end rings are each formed by seven alpha subunits, and the two central rings are each formed by seven beta subunits. The catalytic chamber with the active sites is on the inside of the barrel.

It is found in the cytoplasm. It localises to the nucleus. In terms of biological role, non-catalytic component of the proteasome, a multicatalytic proteinase complex which is characterized by its ability to cleave peptides with Arg, Phe, Tyr, Leu, and Glu adjacent to the leaving group at neutral or slightly basic pH. The proteasome has an ATP-dependent proteolytic activity. This Xenopus laevis (African clawed frog) protein is Proteasome subunit beta type-4 (psmb4).